The sequence spans 259 residues: L-erythrulose-1-phosphate isomerase (259 aa).

His-102 acts as the Electrophile in catalysis. The active-site Proton acceptor is Glu-174.

Belongs to the triosephosphate isomerase family.

It carries out the reaction L-erythrulose 1-phosphate = D-erythrulose 4-phosphate. It functions in the pathway carbohydrate metabolism. In terms of biological role, involved in catabolism of D-apiose. Catalyzes the isomerization of L-erythrulose 1-phosphate to D-erythrulose 4-phosphate. The polypeptide is L-erythrulose-1-phosphate isomerase (Pectobacterium atrosepticum (strain SCRI 1043 / ATCC BAA-672) (Erwinia carotovora subsp. atroseptica)).